Here is a 33-residue protein sequence, read N- to C-terminus: Cytochrome b6-f complex subunit 7 (33 aa).

The chain crosses the membrane as a helical span at residues 5-25 (IFNTAVITFTLVLVGLGAGYL).

Belongs to the PetM family. In terms of assembly, the 4 large subunits of the cytochrome b6-f complex are cytochrome b6, subunit IV (17 kDa polypeptide, PetD), cytochrome f and the Rieske protein, while the 4 small subunits are PetG, PetL, PetM and PetN. The complex functions as a dimer.

The protein resides in the cellular thylakoid membrane. In terms of biological role, component of the cytochrome b6-f complex, which mediates electron transfer between photosystem II (PSII) and photosystem I (PSI), cyclic electron flow around PSI, and state transitions. This chain is Cytochrome b6-f complex subunit 7, found in Thermosynechococcus vestitus (strain NIES-2133 / IAM M-273 / BP-1).